The following is a 161-amino-acid chain: Small ribosomal subunit protein uS9 (161 aa).

Belongs to the universal ribosomal protein uS9 family.

This Bartonella bacilliformis (strain ATCC 35685 / KC583 / Herrer 020/F12,63) protein is Small ribosomal subunit protein uS9.